Here is a 297-residue protein sequence, read N- to C-terminus: Mitochondrial substrate carrier family protein P (297 aa).

Solcar repeat units follow at residues 12-98, 104-189, and 201-293; these read KPSW…IKNH, SSSF…LKRI, and ISGT…LSNF. 6 consecutive transmembrane segments (helical) span residues 15 to 35, 66 to 86, 107 to 127, 165 to 185, 207 to 227, and 262 to 282; these read WVSFLSGGLAGVTAKSAVAPL, GIKGLWRGNSATILRVFPYAA, FQIFLAGSAAGGIAVCATYPL, IQPTLIGILPYGGISFSTFEF, LIAGGIAGGVAQTVAYPFDVV, and ILALYKGLSINYVKVIPTASI.

The protein belongs to the mitochondrial carrier (TC 2.A.29) family.

It localises to the mitochondrion inner membrane. Functionally, mitochondrial solute carriers shuttle metabolites, nucleotides, and cofactors through the mitochondrial inner membrane. Required for the accumulation of coenzyme A in the mitochondrial matrix. The sequence is that of Mitochondrial substrate carrier family protein P (mcfP) from Dictyostelium discoideum (Social amoeba).